We begin with the raw amino-acid sequence, 450 residues long: C4-dicarboxylate transport protein (450 aa).

9 helical membrane-spanning segments follow: residues serine 10 to proline 30, leucine 46 to methionine 66, tyrosine 78 to valine 98, isoleucine 143 to glycine 163, isoleucine 190 to isoleucine 210, leucine 224 to alanine 244, valine 291 to leucine 311, isoleucine 332 to glycine 352, and isoleucine 354 to isoleucine 374. The tract at residues proline 428–valine 450 is disordered.

It belongs to the dicarboxylate/amino acid:cation symporter (DAACS) (TC 2.A.23) family.

Its subcellular location is the cell inner membrane. Its function is as follows. Responsible for the transport of dicarboxylates such as succinate, fumarate, and malate from the periplasm across the membrane. This Pseudomonas syringae pv. syringae (strain B728a) protein is C4-dicarboxylate transport protein.